A 686-amino-acid polypeptide reads, in one-letter code: Rhophilin-2 (686 aa).

Positions 26 to 100 constitute an REM-1 domain; the sequence is NPLAQTGRSK…LEGLNISVGV (75 aa). An interaction with Rho region spans residues 46–66; sequence QILKAMRMRTGAENLLKAATN. The 350-residue stretch at 111–460 folds into the BRO1 domain; sequence PLIPLGLKET…QLKYTQLRED (350 aa). Residues 515 to 593 form the PDZ domain; the sequence is RSIHFTAEEG…DDIEMKVVSL (79 aa). The residue at position 655 (threonine 655) is a Phosphothreonine.

Belongs to the RHPN family. As to quaternary structure, interacts with GTP-bound RhoA and RhoB. Interacts with both GTP- and GDP-bound RhoA. Interacts with KRT18.

It localises to the cytoplasm. The protein localises to the perinuclear region. In terms of biological role, binds specifically to GTP-Rho. May function in a Rho pathway to limit stress fiber formation and/or increase the turnover of F-actin structures in the absence of high levels of RhoA activity. The protein is Rhophilin-2 (RHPN2) of Bos taurus (Bovine).